Here is a 129-residue protein sequence, read N- to C-terminus: Phosphoribosyl-AMP cyclohydrolase (129 aa).

Position 85 (D85) interacts with Mg(2+). C86 provides a ligand contact to Zn(2+). Positions 87 and 89 each coordinate Mg(2+). Residues C102 and C109 each coordinate Zn(2+).

It belongs to the PRA-CH family. In terms of assembly, homodimer. It depends on Mg(2+) as a cofactor. Requires Zn(2+) as cofactor.

It localises to the cytoplasm. The catalysed reaction is 1-(5-phospho-beta-D-ribosyl)-5'-AMP + H2O = 1-(5-phospho-beta-D-ribosyl)-5-[(5-phospho-beta-D-ribosylamino)methylideneamino]imidazole-4-carboxamide. The protein operates within amino-acid biosynthesis; L-histidine biosynthesis; L-histidine from 5-phospho-alpha-D-ribose 1-diphosphate: step 3/9. In terms of biological role, catalyzes the hydrolysis of the adenine ring of phosphoribosyl-AMP. This chain is Phosphoribosyl-AMP cyclohydrolase, found in Methanococcus maripaludis (strain C5 / ATCC BAA-1333).